A 258-amino-acid chain; its full sequence is Thiazole synthase 1 (258 aa).

Lys97 acts as the Schiff-base intermediate with DXP in catalysis. Residues Gly158, 184–185, and 206–207 each bind 1-deoxy-D-xylulose 5-phosphate; these read AG and NT.

Belongs to the ThiG family. In terms of assembly, homotetramer. Forms heterodimers with either ThiH or ThiS.

Its subcellular location is the cytoplasm. The enzyme catalyses [ThiS sulfur-carrier protein]-C-terminal-Gly-aminoethanethioate + 2-iminoacetate + 1-deoxy-D-xylulose 5-phosphate = [ThiS sulfur-carrier protein]-C-terminal Gly-Gly + 2-[(2R,5Z)-2-carboxy-4-methylthiazol-5(2H)-ylidene]ethyl phosphate + 2 H2O + H(+). Its pathway is cofactor biosynthesis; thiamine diphosphate biosynthesis. In terms of biological role, catalyzes the rearrangement of 1-deoxy-D-xylulose 5-phosphate (DXP) to produce the thiazole phosphate moiety of thiamine. Sulfur is provided by the thiocarboxylate moiety of the carrier protein ThiS. In vitro, sulfur can be provided by H(2)S. This Syntrophotalea carbinolica (strain DSM 2380 / NBRC 103641 / GraBd1) (Pelobacter carbinolicus) protein is Thiazole synthase 1.